A 174-amino-acid polypeptide reads, in one-letter code: Gamma-crystallin C (174 aa).

Beta/gamma crystallin 'Greek key' domains follow at residues 2–40 (GKIT…RVES) and 41–83 (GCWM…CLIP). S-methylcysteine is present on cysteine 23. Positions 84–87 (QTVS) are connecting peptide. Beta/gamma crystallin 'Greek key' domains are found at residues 88 to 128 (HRLR…HVLE) and 129 to 171 (GCWV…RRVV).

The protein belongs to the beta/gamma-crystallin family. As to quaternary structure, monomer.

Functionally, crystallins are the dominant structural components of the vertebrate eye lens. This chain is Gamma-crystallin C (CRYGC), found in Homo sapiens (Human).